We begin with the raw amino-acid sequence, 213 residues long: Motile sperm domain-containing protein 1 (213 aa).

One can recognise an MSP domain in the interval 16–143 (PVFVFPTELI…KEHLTESLFF (128 aa)). The next 2 membrane-spanning stretches (helical) occupy residues 159–179 (SLLT…PTLG) and 191–211 (LSVN…MAIL). Positions 205–208 (LITM) match the Nuclear export signal motif.

It localises to the endoplasmic reticulum membrane. The protein resides in the golgi apparatus membrane. Functionally, plays a role in differentiation and/or proliferation of mesenchymal stem cells. Proposed to be involved in epithelial-to-mesenchymal transition (EMT). However, another study suggests that it is not required for EMT or stem cell self-renewal and acts during later stages of differentiation. This chain is Motile sperm domain-containing protein 1 (MOSPD1), found in Pongo abelii (Sumatran orangutan).